A 457-amino-acid chain; its full sequence is Putative transposase y4bF (457 aa).

The Integrase catalytic domain occupies 128-313 (TFHQPRLRRE…RPLNLAPDRL (186 aa)). The disordered stretch occupies residues 406 to 440 (QDERPAPKVRTNSEKNGYTPRGRKPGKRTDFMNDP).

The sequence is that of Putative transposase y4bF from Sinorhizobium fredii (strain NBRC 101917 / NGR234).